Reading from the N-terminus, the 671-residue chain is MESIEQQLTELRTTLRHHEYLYHVMDAPEIPDAEYDRLMRELRELETKHPELITPDSPTQRVGAAPLAAFSQIRHEVPMLSLDNVFDEESFLAFNKRVQDRLKSNEKVTWCCELKLDGLAVSILYENGVLVSAATRGDGTTGEDITSNVRTIRAIPLKLHGENIPARLEVRGEVFLPQAGFEKINEDARRTGGKVFANPRNAAAGSLRQLDPRITAKRPLTFFCYGVGVLEGGELPDTHLGRLMQFKAWGLPVSDRVTLCESAEEVLAFYHKVEEDRPTLGFDIDGVVIKVNSLAQQEQLGFVARAPRWAVAFKFPAQEQMTFVRDVEFQVGRTGAITPVARLEPVHVAGVLVSNATLHNADEIERLGLRIGDKVVIRRAGDVIPQVVNVVLSERPEDTREVVFPTHCPVCGSDVERVEGEAVARCTGGLICGAQRKESLKHFVSRRAMDVDGMGDKIIDQLVEKEYVHTPADLFKLTAGKLTGLERMGPKSAQNVVNALEKAKETTFARFLYALGVREVGEATAAGLAAYFGTLEALEAASIEELQKVPDVGIVVASHVHNFFAEESNRNVISELLAEGVHWPEPIVINAEEIDSPFAGKTVVLTGSLSQMSRDDAKARLVELGAKVAGSVSKKTDLVIAGEAAGSKLAKAQELGIEVIDETEMLRLLGS.

NAD(+)-binding positions include 32–36 (DAEYD), 81–82 (SL), and E113. K115 acts as the N6-AMP-lysine intermediate in catalysis. R136, E173, K290, and K314 together coordinate NAD(+). C408, C411, C426, and C432 together coordinate Zn(2+). Positions 593 to 671 (EIDSPFAGKT…ETEMLRLLGS (79 aa)) constitute a BRCT domain.

Belongs to the NAD-dependent DNA ligase family. LigA subfamily. It depends on Mg(2+) as a cofactor. Requires Mn(2+) as cofactor.

It carries out the reaction NAD(+) + (deoxyribonucleotide)n-3'-hydroxyl + 5'-phospho-(deoxyribonucleotide)m = (deoxyribonucleotide)n+m + AMP + beta-nicotinamide D-nucleotide.. DNA ligase that catalyzes the formation of phosphodiester linkages between 5'-phosphoryl and 3'-hydroxyl groups in double-stranded DNA using NAD as a coenzyme and as the energy source for the reaction. It is essential for DNA replication and repair of damaged DNA. The chain is DNA ligase from Escherichia coli O1:K1 / APEC.